Here is a 504-residue protein sequence, read N- to C-terminus: Maturase K (504 aa).

It belongs to the intron maturase 2 family. MatK subfamily.

It localises to the plastid. The protein localises to the chloroplast. Usually encoded in the trnK tRNA gene intron. Probably assists in splicing its own and other chloroplast group II introns. The sequence is that of Maturase K from Actinidia deliciosa (Kiwi).